The following is a 23-amino-acid chain: Basic phospholipase A2 intermexin (23 aa).

The protein belongs to the phospholipase A2 family. Group II subfamily. Ca(2+) serves as cofactor. Post-translationally, contains 7 disulfide bonds. In terms of tissue distribution, expressed by the venom gland.

It localises to the secreted. The enzyme catalyses a 1,2-diacyl-sn-glycero-3-phosphocholine + H2O = a 1-acyl-sn-glycero-3-phosphocholine + a fatty acid + H(+). Snake venom phospholipase A2 (PLA2) that shows presynaptic neurotoxicity and low myotoxicity. PLA2 catalyzes the calcium-dependent hydrolysis of the 2-acyl groups in 3-sn-phosphoglycerides. This is Basic phospholipase A2 intermexin from Gloydius intermedius (Central Asian pit viper).